A 253-amino-acid chain; its full sequence is 5'-nucleotidase SurE (253 aa).

Positions 8, 9, 39, and 92 each coordinate a divalent metal cation.

This sequence belongs to the SurE nucleotidase family. A divalent metal cation serves as cofactor.

Its subcellular location is the cytoplasm. The enzyme catalyses a ribonucleoside 5'-phosphate + H2O = a ribonucleoside + phosphate. Nucleotidase that shows phosphatase activity on nucleoside 5'-monophosphates. The sequence is that of 5'-nucleotidase SurE from Burkholderia mallei (strain NCTC 10247).